Here is a 290-residue protein sequence, read N- to C-terminus: Barley B recombinant-like protein C (290 aa).

2 disordered regions span residues Pro60–Met90 and Gln102–Ile183. The span at Glu104–Pro116 shows a compositional bias: pro residues. Positions Pro138–Lys158 are enriched in basic residues.

The protein belongs to the BBR/BPC family.

The protein resides in the nucleus. In terms of biological role, transcriptional regulator that specifically binds to GA-rich elements (GAGA-repeats) present in regulatory sequences of genes involved in developmental processes. The sequence is that of Barley B recombinant-like protein C from Oryza sativa subsp. japonica (Rice).